A 343-amino-acid chain; its full sequence is MKFFSLADEAEFKSIIISKNKAVDVIGSKLGGQVVSFSDEWFASAENLIQPTAPIRDPTRFVHSGAWYDGWETRRHNEMEYDWVIIKMGVAAAHIIGGEIDTAFFNGNHAPFVSIEALYDEGEEGNIVEDDSRWVEIVEKFECGPSQRHLFVRGNGLTKERFTHIKLKMYPDGGIARFRLYGRVVPPELKTKDHIIDLAYVCNGAVALKYSDQHFGSVDNLLLPGRGHDMSDGWETKRSRQPGHTDWAVIQLGRESSFIEKIIVDTAHFRGNFPQFITVEGCLKESESSENTGEGTWVELVGKSKTGPDKEHVYEIRKSIRVSHVKLTIIPDGGVKRIRVWGY.

Belongs to the allantoicase family.

The catalysed reaction is allantoate + H2O = (S)-ureidoglycolate + urea. The protein operates within nitrogen metabolism; (S)-allantoin degradation; (S)-ureidoglycolate from allantoate (aminidohydrolase route): step 1/1. Utilization of purines as secondary nitrogen sources, when primary sources are limiting. The sequence is that of Allantoicase (DAL2) from Saccharomyces cerevisiae (strain ATCC 204508 / S288c) (Baker's yeast).